A 236-amino-acid polypeptide reads, in one-letter code: Purine nucleoside phosphorylase DeoD-type (236 aa).

His-5 contributes to the a purine D-ribonucleoside binding site. Residues Gly-21, Arg-25, Arg-44, and 88–91 (RVGT) contribute to the phosphate site. A purine D-ribonucleoside-binding positions include 180 to 182 (DME) and 204 to 205 (SD). Catalysis depends on Asp-205, which acts as the Proton donor.

The protein belongs to the PNP/UDP phosphorylase family. In terms of assembly, homohexamer; trimer of homodimers.

It catalyses the reaction a purine D-ribonucleoside + phosphate = a purine nucleobase + alpha-D-ribose 1-phosphate. The enzyme catalyses a purine 2'-deoxy-D-ribonucleoside + phosphate = a purine nucleobase + 2-deoxy-alpha-D-ribose 1-phosphate. Its function is as follows. Catalyzes the reversible phosphorolytic breakdown of the N-glycosidic bond in the beta-(deoxy)ribonucleoside molecules, with the formation of the corresponding free purine bases and pentose-1-phosphate. This is Purine nucleoside phosphorylase DeoD-type from Buchnera aphidicola subsp. Schizaphis graminum (strain Sg).